The primary structure comprises 746 residues: NAD(P)H-quinone oxidoreductase subunit 5, chloroplastic (746 aa).

16 helical membrane passes run 9-29 (WIIPFIPLPVPILLGVGLLLF), 40-60 (WTFLSIFLLSIIMIFSLYLSI), 89-109 (IDPLTSIMSILITTVGILVLI), 125-145 (FAYMGFFNTSMLGLVTSSNLI), 147-167 (VYFFWELVGMCSYLLIGFWFT), 185-205 (GDFGLLLGILGLYWITGSFEF), 221-241 (VNLLFLTLCAFLLFVGPIAKS), 258-278 (TPISALIHAATMVAAGIFLVA), 280-300 (LLPLFIVIPSIMYIISLIGII), 327-347 (LGYMMLALGMGSYRSALFHLI), 354-374 (ALLFLGSGSIIHSMEAIVGYS), 396-416 (IAFLVGTLSLCGIPPLACFWS), 425-445 (LLFSPIFAIIAFSTAGLTAFY), 547-567 (ILFPMLVLLLFTLFIGAIGIP), 608-628 (FSVSIAFFGIFIAYYLYKPFY), and 723-743 (YLFLYLSYVLIFLMILFFFYF).

Belongs to the complex I subunit 5 family. NDH is composed of at least 16 different subunits, 5 of which are encoded in the nucleus.

Its subcellular location is the plastid. It is found in the chloroplast thylakoid membrane. The catalysed reaction is a plastoquinone + NADH + (n+1) H(+)(in) = a plastoquinol + NAD(+) + n H(+)(out). It catalyses the reaction a plastoquinone + NADPH + (n+1) H(+)(in) = a plastoquinol + NADP(+) + n H(+)(out). In terms of biological role, NDH shuttles electrons from NAD(P)H:plastoquinone, via FMN and iron-sulfur (Fe-S) centers, to quinones in the photosynthetic chain and possibly in a chloroplast respiratory chain. The immediate electron acceptor for the enzyme in this species is believed to be plastoquinone. Couples the redox reaction to proton translocation, and thus conserves the redox energy in a proton gradient. This is NAD(P)H-quinone oxidoreductase subunit 5, chloroplastic (ndhF) from Nasturtium officinale (Watercress).